Here is a 344-residue protein sequence, read N- to C-terminus: MIVDYEKDPRAKEAIAIWEKGVLKEKDGSMSDAINFYRSALKIHDNVESLYRKKILDEWMLHKKLSGLSMTTDAPDEQNETGKDDLSVEENAELQPCWILEILPDDILLRIIKKVILMSGESWVNLSMTCSTFSKLCFHDSVPFKTFAKYIYSKQIYDKMAMDLNGITDINTFEKEIWRGDDYRMLRERPYIKFEGVYISVVNYVRYGSNAESSLSLLKPVHMITYYRYFRFYENGQCLRLLSTDEPSAVVKHFSKENKPRHSHMCYWSLGFDYDFGHLKITRSDEKYTFIEEFQIKNQGNKRYQRLKWLSSIVVDKEGNASNCSLRNEKSFFFSRVKSFKDPG.

One copy of the TPR repeat lies at Ala14–Val47. Residues Trp98–Ala148 form the F-box domain.

In terms of assembly, interacts with SKP1. Component of the probable SCF(HRT3) complex containing CDC53, SKP1, RBX1 and HRT3.

It functions in the pathway protein modification; protein ubiquitination. Its function is as follows. Substrate recognition component of a SCF (SKP1-CUL1-F-box protein) E3 ubiquitin-protein ligase complex which mediates the ubiquitination and subsequent proteasomal degradation of target proteins. Probably recognizes and binds to phosphorylated target proteins. The protein is F-box protein HRT3 (HRT3) of Saccharomyces cerevisiae (strain ATCC 204508 / S288c) (Baker's yeast).